Consider the following 179-residue polypeptide: Large ribosomal subunit protein uL5 (179 aa).

This sequence belongs to the universal ribosomal protein uL5 family. Part of the 50S ribosomal subunit; part of the 5S rRNA/L5/L18/L25 subcomplex. Contacts the 5S rRNA and the P site tRNA. Forms a bridge to the 30S subunit in the 70S ribosome.

This is one of the proteins that bind and probably mediate the attachment of the 5S RNA into the large ribosomal subunit, where it forms part of the central protuberance. In the 70S ribosome it contacts protein S13 of the 30S subunit (bridge B1b), connecting the 2 subunits; this bridge is implicated in subunit movement. Contacts the P site tRNA; the 5S rRNA and some of its associated proteins might help stabilize positioning of ribosome-bound tRNAs. In Photobacterium profundum (strain SS9), this protein is Large ribosomal subunit protein uL5.